The following is an 85-amino-acid chain: Putative defensin-like protein 258 (85 aa).

The N-terminal stretch at 1-25 (MINVSLKRSLLIFISVITSNIGSEA) is a signal peptide. Intrachain disulfides connect cysteine 57–cysteine 75, cysteine 63–cysteine 82, and cysteine 67–cysteine 84.

It belongs to the DEFL family.

It is found in the secreted. The protein is Putative defensin-like protein 258 of Arabidopsis thaliana (Mouse-ear cress).